Here is a 121-residue protein sequence, read N- to C-terminus: Small ribosomal subunit protein bS16 (121 aa).

Positions 80-121 (AGVREKTERNNPNKAKPGKKAQERAEEKAAKAAEAAEAADAE) are disordered. Basic and acidic residues-rich tracts occupy residues 81 to 90 (GVREKTERNN) and 99 to 110 (KAQERAEEKAAK).

The protein belongs to the bacterial ribosomal protein bS16 family.

This chain is Small ribosomal subunit protein bS16, found in Ruegeria sp. (strain TM1040) (Silicibacter sp.).